A 77-amino-acid polypeptide reads, in one-letter code: Conotoxin King-Kong 2 (77 aa).

The signal sequence occupies residues 1-22; that stretch reads MKLTCMMIVAVLFLTAWTFVTA. Residues 23-49 constitute a propeptide that is removed on maturation; that stretch reads DDSGNGLENLFSKAHHEMKNPEASNLN. Cystine bridges form between C52/C67, C59/C71, and C66/C76. The residue at position 76 (C76) is a Cysteine amide.

Belongs to the conotoxin O1 superfamily. Expressed by the venom duct.

The protein resides in the secreted. This is Conotoxin King-Kong 2 from Conus textile (Cloth-of-gold cone).